A 436-amino-acid chain; its full sequence is 3-ketoacyl-CoA thiolase (436 aa).

The active-site Acyl-thioester intermediate is the Cys99. Catalysis depends on proton acceptor residues His392 and Cys422.

It belongs to the thiolase-like superfamily. Thiolase family. As to quaternary structure, heterotetramer of two alpha chains (FadJ) and two beta chains (FadI).

It localises to the cytoplasm. The enzyme catalyses an acyl-CoA + acetyl-CoA = a 3-oxoacyl-CoA + CoA. The protein operates within lipid metabolism; fatty acid beta-oxidation. Its function is as follows. Catalyzes the final step of fatty acid oxidation in which acetyl-CoA is released and the CoA ester of a fatty acid two carbons shorter is formed. The chain is 3-ketoacyl-CoA thiolase from Salmonella newport (strain SL254).